A 509-amino-acid polypeptide reads, in one-letter code: Dye-decolorizing peroxidase AauDyP1 (509 aa).

The signal sequence occupies residues 1–22; sequence MRLSPVFVALLSGLLAADLGLA. The propeptide occupies 23–61; the sequence is RSVAPRVADSPAAVTGTRKTSLLKNVAGLPPVPSAAQVA. The active-site Proton acceptor is Asp-229. Residue Asn-343 is glycosylated (N-linked (GlcNAc...) asparagine). Heme is bound at residue His-365. 3 N-linked (GlcNAc...) asparagine glycosylation sites follow: Asn-383, Asn-410, and Asn-476.

It belongs to the DyP-type peroxidase family. Heme b serves as cofactor.

The protein resides in the secreted. It catalyses the reaction Reactive Blue 5 + 2 H2O2 = 2,2'-disulfonyl azobenzene + 3-[(4-amino-6-chloro-1,3,5-triazin-2-yl)amino]benzenesulfonate + phthalate + 2 H2O + 2 H(+). It carries out the reaction 2 a phenolic donor + H2O2 = 2 a phenolic radical donor + 2 H2O. With respect to regulation, inhibited by imidazole. Functionally, manganese-independent peroxidase that is able to convert a large number of compounds, but its physiological substrate is not known. In addition to classic peroxidase substrates (e.g. 2,6-dimethoxyphenol), oxidizes dyes such as Reactive Blue 5 and Reactive Black 5. In Auricularia auricula-judae (Judas ear fungus), this protein is Dye-decolorizing peroxidase AauDyP1.